The primary structure comprises 388 residues: Methylthioribose-1-phosphate isomerase (388 aa).

The Proton donor role is filled by Asp253.

It belongs to the eIF-2B alpha/beta/delta subunits family. MtnA subfamily.

The protein localises to the cytoplasm. The protein resides in the nucleus. It catalyses the reaction 5-(methylsulfanyl)-alpha-D-ribose 1-phosphate = 5-(methylsulfanyl)-D-ribulose 1-phosphate. Its pathway is amino-acid biosynthesis; L-methionine biosynthesis via salvage pathway; L-methionine from S-methyl-5-thio-alpha-D-ribose 1-phosphate: step 1/6. Functionally, catalyzes the interconversion of methylthioribose-1-phosphate (MTR-1-P) into methylthioribulose-1-phosphate (MTRu-1-P). The sequence is that of Methylthioribose-1-phosphate isomerase from Fusarium vanettenii (strain ATCC MYA-4622 / CBS 123669 / FGSC 9596 / NRRL 45880 / 77-13-4) (Fusarium solani subsp. pisi).